The chain runs to 97 residues: MKKMLLATALALLITGCAQQTFTVQNKQTAVAPKETITHHFFVSGIGQKKTVDAAKICGGAENVVKTETQQTFVNGLLGFITLGIYTPLEARVYCSK.

The first 16 residues, 1–16, serve as a signal peptide directing secretion; the sequence is MKKMLLATALALLITG. The N-palmitoyl cysteine moiety is linked to residue Cys-17. Cys-17 carries the S-diacylglycerol cysteine lipid modification.

It belongs to the lambda phage bor family.

It localises to the cell membrane. The sequence is that of Prophage lipoprotein Bor homolog (borD) from Escherichia coli (strain K12).